The following is a 301-amino-acid chain: NADH-ubiquinone oxidoreductase chain 1 (301 aa).

Transmembrane regions (helical) follow at residues isoleucine 4–tyrosine 24, leucine 62–proline 82, isoleucine 96–alanine 116, leucine 140–isoleucine 160, tyrosine 165–alanine 185, leucine 216–phenylalanine 236, glutamate 247–isoleucine 267, and leucine 279–valine 299.

Belongs to the complex I subunit 1 family.

It is found in the mitochondrion inner membrane. It carries out the reaction a ubiquinone + NADH + 5 H(+)(in) = a ubiquinol + NAD(+) + 4 H(+)(out). Its function is as follows. Core subunit of the mitochondrial membrane respiratory chain NADH dehydrogenase (Complex I) that is believed to belong to the minimal assembly required for catalysis. Complex I functions in the transfer of electrons from NADH to the respiratory chain. The immediate electron acceptor for the enzyme is believed to be ubiquinone. This chain is NADH-ubiquinone oxidoreductase chain 1 (MT-ND1), found in Nyctalus noctula (Noctule bat).